A 366-amino-acid chain; its full sequence is Dual-specificity RNA methyltransferase RlmN (366 aa).

The Proton acceptor role is filled by Glu91. A Radical SAM core domain is found at 97 to 333 (EDDRGTLCVS…TTVRKTRGED (237 aa)). Cys104 and Cys338 are disulfide-bonded. Residues Cys111, Cys115, and Cys118 each coordinate [4Fe-4S] cluster. Residues 164-165 (GE), Ser196, 218-220 (SLH), and Asn295 each bind S-adenosyl-L-methionine. Cys338 (S-methylcysteine intermediate) is an active-site residue.

This sequence belongs to the radical SAM superfamily. RlmN family. The cofactor is [4Fe-4S] cluster.

Its subcellular location is the cytoplasm. It carries out the reaction adenosine(2503) in 23S rRNA + 2 reduced [2Fe-2S]-[ferredoxin] + 2 S-adenosyl-L-methionine = 2-methyladenosine(2503) in 23S rRNA + 5'-deoxyadenosine + L-methionine + 2 oxidized [2Fe-2S]-[ferredoxin] + S-adenosyl-L-homocysteine. The catalysed reaction is adenosine(37) in tRNA + 2 reduced [2Fe-2S]-[ferredoxin] + 2 S-adenosyl-L-methionine = 2-methyladenosine(37) in tRNA + 5'-deoxyadenosine + L-methionine + 2 oxidized [2Fe-2S]-[ferredoxin] + S-adenosyl-L-homocysteine. Specifically methylates position 2 of adenine 2503 in 23S rRNA and position 2 of adenine 37 in tRNAs. m2A2503 modification seems to play a crucial role in the proofreading step occurring at the peptidyl transferase center and thus would serve to optimize ribosomal fidelity. The polypeptide is Dual-specificity RNA methyltransferase RlmN (Laribacter hongkongensis (strain HLHK9)).